We begin with the raw amino-acid sequence, 253 residues long: Geranylgeranylglyceryl phosphate synthase (253 aa).

Mg(2+) is bound by residues aspartate 23 and serine 52. Residues 171-177 (YFEAGSG), 202-203 (GG), and 224-225 (GT) contribute to the sn-glycerol 1-phosphate site.

The protein belongs to the GGGP/HepGP synthase family. Group II subfamily. In terms of assembly, homodimer. Mg(2+) is required as a cofactor.

The protein resides in the cytoplasm. It catalyses the reaction sn-glycerol 1-phosphate + (2E,6E,10E)-geranylgeranyl diphosphate = sn-3-O-(geranylgeranyl)glycerol 1-phosphate + diphosphate. The protein operates within membrane lipid metabolism; glycerophospholipid metabolism. With respect to regulation, inhibited by high concentrations of magnesium (&gt;10 mM) and by EDTA in vitro. Its function is as follows. Prenyltransferase that catalyzes the transfer of the geranylgeranyl moiety of geranylgeranyl diphosphate (GGPP) to the C3 hydroxyl of sn-glycerol-1-phosphate (G1P). This reaction is the first ether-bond-formation step in the biosynthesis of archaeal membrane lipids. Cannot use sn-glycerol-3-phosphate (G3P) as substrate. The protein is Geranylgeranylglyceryl phosphate synthase of Thermoplasma acidophilum (strain ATCC 25905 / DSM 1728 / JCM 9062 / NBRC 15155 / AMRC-C165).